The following is a 345-amino-acid chain: Phosphoribosylformylglycinamidine cyclo-ligase (345 aa).

This sequence belongs to the AIR synthase family.

It localises to the cytoplasm. It carries out the reaction 2-formamido-N(1)-(5-O-phospho-beta-D-ribosyl)acetamidine + ATP = 5-amino-1-(5-phospho-beta-D-ribosyl)imidazole + ADP + phosphate + H(+). The protein operates within purine metabolism; IMP biosynthesis via de novo pathway; 5-amino-1-(5-phospho-D-ribosyl)imidazole from N(2)-formyl-N(1)-(5-phospho-D-ribosyl)glycinamide: step 2/2. This is Phosphoribosylformylglycinamidine cyclo-ligase from Escherichia coli (strain SE11).